Consider the following 161-residue polypeptide: Regulator of ribonuclease activity A (161 aa).

It belongs to the RraA family. As to quaternary structure, homotrimer. Binds to both RNA-binding sites in the C-terminal region of Rne and to RhlB.

The protein localises to the cytoplasm. Its function is as follows. Globally modulates RNA abundance by binding to RNase E (Rne) and regulating its endonucleolytic activity. Can modulate Rne action in a substrate-dependent manner by altering the composition of the degradosome. Modulates RNA-binding and helicase activities of the degradosome. The sequence is that of Regulator of ribonuclease activity A from Photobacterium profundum (strain SS9).